Here is a 257-residue protein sequence, read N- to C-terminus: Alcohol dehydrogenase 1 (257 aa).

9–33 (VFVGGLGFIGYEACKTLITRDLASL) contacts NAD(+). Position 137 (Ser137) interacts with substrate. Tyr150 serves as the catalytic Proton acceptor.

The protein belongs to the short-chain dehydrogenases/reductases (SDR) family. In terms of assembly, homodimer.

The enzyme catalyses a primary alcohol + NAD(+) = an aldehyde + NADH + H(+). It carries out the reaction a secondary alcohol + NAD(+) = a ketone + NADH + H(+). The polypeptide is Alcohol dehydrogenase 1 (ADH1) (Ceratitis cosyra (Mango fruit fly)).